The following is a 318-amino-acid chain: NADH-ubiquinone oxidoreductase chain 1 (318 aa).

8 consecutive transmembrane segments (helical) span residues 2–22, 69–89, 100–120, 146–166, 171–191, 223–243, 253–273, and 294–314; these read FMIN…FLTL, LMFI…WIPL, LGVL…LWSG, LAII…AMLI, YMWL…STLA, FFLA…ILFF, ELYT…FLWI, and LPLT…TASI.

This sequence belongs to the complex I subunit 1 family. As to quaternary structure, core subunit of respiratory chain NADH dehydrogenase (Complex I) which is composed of 45 different subunits.

Its subcellular location is the mitochondrion inner membrane. It catalyses the reaction a ubiquinone + NADH + 5 H(+)(in) = a ubiquinol + NAD(+) + 4 H(+)(out). Core subunit of the mitochondrial membrane respiratory chain NADH dehydrogenase (Complex I) which catalyzes electron transfer from NADH through the respiratory chain, using ubiquinone as an electron acceptor. Essential for the catalytic activity and assembly of complex I. This chain is NADH-ubiquinone oxidoreductase chain 1 (MT-ND1), found in Felis catus (Cat).